A 707-amino-acid polypeptide reads, in one-letter code: Ribosomal RNA large subunit methyltransferase K/L (707 aa).

The region spanning Q43–M154 is the THUMP domain.

This sequence belongs to the methyltransferase superfamily. RlmKL family.

Its subcellular location is the cytoplasm. It carries out the reaction guanosine(2445) in 23S rRNA + S-adenosyl-L-methionine = N(2)-methylguanosine(2445) in 23S rRNA + S-adenosyl-L-homocysteine + H(+). The catalysed reaction is guanosine(2069) in 23S rRNA + S-adenosyl-L-methionine = N(2)-methylguanosine(2069) in 23S rRNA + S-adenosyl-L-homocysteine + H(+). In terms of biological role, specifically methylates the guanine in position 2445 (m2G2445) and the guanine in position 2069 (m7G2069) of 23S rRNA. The protein is Ribosomal RNA large subunit methyltransferase K/L of Vibrio campbellii (strain ATCC BAA-1116).